Here is a 198-residue protein sequence, read N- to C-terminus: Inosine triphosphate pyrophosphatase (198 aa).

A2 is subject to N-acetylalanine. Residue 14 to 19 (TGNAKK) coordinates ITP. E44 contacts Mg(2+). Residues K56, 72 to 73 (DT), and K89 contribute to the ITP site. S146 is subject to Phosphoserine. Residues 149-152 (FGWD), K172, and 177-178 (HR) each bind ITP.

This sequence belongs to the HAM1 NTPase family. Homodimer. Mg(2+) serves as cofactor. The cofactor is Mn(2+).

The protein localises to the cytoplasm. The enzyme catalyses ITP + H2O = IMP + diphosphate + H(+). The catalysed reaction is dITP + H2O = dIMP + diphosphate + H(+). It catalyses the reaction XTP + H2O = XMP + diphosphate + H(+). It carries out the reaction N(6)-hydroxy-dATP + H2O = N(6)-hydroxy-dAMP + diphosphate + H(+). In terms of biological role, pyrophosphatase that hydrolyzes the non-canonical purine nucleotides inosine triphosphate (ITP), deoxyinosine triphosphate (dITP) as well as 2'-deoxy-N-6-hydroxylaminopurine triphosphate (dHAPTP) and xanthosine 5'-triphosphate (XTP) to their respective monophosphate derivatives. The enzyme does not distinguish between the deoxy- and ribose forms. Probably excludes non-canonical purines from RNA and DNA precursor pools, thus preventing their incorporation into RNA and DNA and avoiding chromosomal lesions. This is Inosine triphosphate pyrophosphatase (Itpa) from Mus musculus (Mouse).